The sequence spans 662 residues: UvrABC system protein B (662 aa).

The region spanning 31–188 (DNIEGGEKAQ…NDLVDIQFER (158 aa)) is the Helicase ATP-binding domain. 44-51 (GATGTGKT) contributes to the ATP binding site. The short motif at 97–120 (YYDYYQPEAYVPSSDTYIEKDSSV) is the Beta-hairpin element. One can recognise a Helicase C-terminal domain in the interval 435–601 (QIDDLLGEIN…TIKKEIRDLI (167 aa)). Residues 626–661 (KDMIKKLEGQMQEAAGLLDFELAAQIRDMILEIKAM) enclose the UVR domain.

It belongs to the UvrB family. Forms a heterotetramer with UvrA during the search for lesions. Interacts with UvrC in an incision complex.

The protein resides in the cytoplasm. Functionally, the UvrABC repair system catalyzes the recognition and processing of DNA lesions. A damage recognition complex composed of 2 UvrA and 2 UvrB subunits scans DNA for abnormalities. Upon binding of the UvrA(2)B(2) complex to a putative damaged site, the DNA wraps around one UvrB monomer. DNA wrap is dependent on ATP binding by UvrB and probably causes local melting of the DNA helix, facilitating insertion of UvrB beta-hairpin between the DNA strands. Then UvrB probes one DNA strand for the presence of a lesion. If a lesion is found the UvrA subunits dissociate and the UvrB-DNA preincision complex is formed. This complex is subsequently bound by UvrC and the second UvrB is released. If no lesion is found, the DNA wraps around the other UvrB subunit that will check the other stand for damage. In Streptococcus gordonii (strain Challis / ATCC 35105 / BCRC 15272 / CH1 / DL1 / V288), this protein is UvrABC system protein B.